Consider the following 364-residue polypeptide: DNA replication and repair protein RecF (364 aa).

Gly30–Thr37 is a binding site for ATP.

The protein belongs to the RecF family.

The protein localises to the cytoplasm. Its function is as follows. The RecF protein is involved in DNA metabolism; it is required for DNA replication and normal SOS inducibility. RecF binds preferentially to single-stranded, linear DNA. It also seems to bind ATP. The polypeptide is DNA replication and repair protein RecF (Pelotomaculum thermopropionicum (strain DSM 13744 / JCM 10971 / SI)).